The sequence spans 347 residues: S-adenosylmethionine:tRNA ribosyltransferase-isomerase (347 aa).

This sequence belongs to the QueA family. Monomer.

It is found in the cytoplasm. The enzyme catalyses 7-aminomethyl-7-carbaguanosine(34) in tRNA + S-adenosyl-L-methionine = epoxyqueuosine(34) in tRNA + adenine + L-methionine + 2 H(+). The protein operates within tRNA modification; tRNA-queuosine biosynthesis. In terms of biological role, transfers and isomerizes the ribose moiety from AdoMet to the 7-aminomethyl group of 7-deazaguanine (preQ1-tRNA) to give epoxyqueuosine (oQ-tRNA). The polypeptide is S-adenosylmethionine:tRNA ribosyltransferase-isomerase (Treponema denticola (strain ATCC 35405 / DSM 14222 / CIP 103919 / JCM 8153 / KCTC 15104)).